The primary structure comprises 505 residues: Acetylcholine receptor subunit beta (505 aa).

The signal sequence occupies residues 1-24; the sequence is MTPGALLLLLLGVLGAHLAPGARG. Residues 25–245 lie on the Extracellular side of the membrane; sequence SEAEGRLREK…VTFYLIIRRK (221 aa). C152 and C166 are disulfide-bonded. N-linked (GlcNAc...) asparagine glycosylation occurs at N165. The next 3 helical transmembrane spans lie at 246–270, 278–295, and 312–333; these read PLFY…VFYL, MGLS…LLLL, and YLMF…VLNL. At 334 to 473 the chain is on the cytoplasmic side; sequence HHRSPHTHQM…WQFVAMVVDR (140 aa). Residues 365–391 are disordered; that stretch reads KPERDQMQEPPSIAPRDSPGSGWGRGT. Y394 carries the post-translational modification Phosphotyrosine; by Tyr-kinases. A helical membrane pass occupies residues 474–492; the sequence is LFLWTFIIFTSVGTLVIFL.

Belongs to the ligand-gated ion channel (TC 1.A.9) family. Acetylcholine receptor (TC 1.A.9.1) subfamily. Beta-1/CHRNB1 sub-subfamily. As to quaternary structure, pentamer of two alpha chains, and one each of the beta, delta, and gamma (in immature muscle) or epsilon (in mature muscle) chains. The muscle heteropentamer composed of alpha-1, beta-1, delta, epsilon subunits interacts with the alpha-conotoxin ImII.

It localises to the postsynaptic cell membrane. Its subcellular location is the cell membrane. It carries out the reaction K(+)(in) = K(+)(out). The enzyme catalyses Na(+)(in) = Na(+)(out). In terms of biological role, after binding acetylcholine, the AChR responds by an extensive change in conformation that affects all subunits and leads to opening of an ion-conducting channel across the plasma membrane. The polypeptide is Acetylcholine receptor subunit beta (CHRNB1) (Bos taurus (Bovine)).